The sequence spans 159 residues: Transcriptional repressor NrdR (159 aa).

Polar residues predominate over residues 1–11 (MQCPTCQNTDS). The interval 1-21 (MQCPTCQNTDSRVLESRSADS) is disordered. A zinc finger lies at 3 to 34 (CPTCQNTDSRVLESRSADSGKSVRRRRECLNC). An ATP-cone domain is found at 49-139 (VSVLKKDGGR…VYRKFNGVKD (91 aa)).

The protein belongs to the NrdR family. It depends on Zn(2+) as a cofactor.

In terms of biological role, negatively regulates transcription of bacterial ribonucleotide reductase nrd genes and operons by binding to NrdR-boxes. The protein is Transcriptional repressor NrdR of Prochlorococcus marinus (strain AS9601).